An 807-amino-acid polypeptide reads, in one-letter code: Spondin-1 (807 aa).

An N-terminal signal peptide occupies residues 1-28 (MRLSPVLLRLSRGPALLALALPLAVALA). Residues 29 to 194 (FSDETLDKVP…DSTFDGVTDK (166 aa)) enclose the Reelin domain. Disulfide bonds link cysteine 44/cysteine 128, cysteine 156/cysteine 182, cysteine 199/cysteine 336, cysteine 200/cysteine 340, cysteine 202/cysteine 415, cysteine 443/cysteine 480, cysteine 454/cysteine 489, cysteine 459/cysteine 494, cysteine 502/cysteine 538, cysteine 513/cysteine 517, cysteine 548/cysteine 554, cysteine 559/cysteine 595, cysteine 570/cysteine 574, cysteine 605/cysteine 610, cysteine 615/cysteine 650, cysteine 626/cysteine 630, and cysteine 660/cysteine 665. The Spondin domain occupies 195–388 (PILDCCACGT…LTSLDHPQSP (194 aa)). An N-linked (GlcNAc...) asparagine glycan is attached at asparagine 214. The Ca(2+) site is built by aspartate 325, aspartate 354, and aspartate 358. 6 consecutive TSP type-1 domains span residues 442–495 (TCIY…PGCS), 501–555 (TCTM…EECS), 558–611 (SCLT…PECH), 614–666 (PCLL…PECP), 668–721 (DCEL…RKCL), and 754–806 (GCRM…NVHP). N-linked (GlcNAc...) asparagine glycosylation is present at asparagine 681.

As to quaternary structure, binds to the central extracellular domain of APP and inhibits beta-secretase cleavage of APP.

The protein localises to the secreted. Its subcellular location is the extracellular space. It localises to the extracellular matrix. Its function is as follows. Cell adhesion protein that promotes the attachment of spinal cord and sensory neuron cells and the outgrowth of neurites in vitro. May contribute to the growth and guidance of axons in both the spinal cord and the PNS. Major factor for vascular smooth muscle cell. This is Spondin-1 (SPON1) from Bos taurus (Bovine).